We begin with the raw amino-acid sequence, 30 residues long: Rothein 3.1 (30 aa).

Position 30 is a leucine amide (Leu30).

As to expression, expressed by the skin dorsal glands.

The protein localises to the secreted. Its function is as follows. Lacks antimicrobial activity. Does not inhibit the formation of NO by neuronal nitric oxide. The chain is Rothein 3.1 from Litoria rothii (Roth's tree frog).